A 400-amino-acid chain; its full sequence is Elongation factor Tu 2 (400 aa).

The tr-type G domain maps to 10-209; sequence KPHLNIGTIG…AVDSYIPLPQ (200 aa). A G1 region spans residues 19–26; it reads GHIDHGKT. 19–26 provides a ligand contact to GTP; sequence GHIDHGKT. Position 26 (Thr-26) interacts with Mg(2+). The interval 60-64 is G2; sequence GITIN. Residues 81 to 84 are G3; that stretch reads DCPG. Residues 81–85 and 136–139 each bind GTP; these read DCPGH and NKID. The segment at 136 to 139 is G4; it reads NKID. The G5 stretch occupies residues 174-176; that stretch reads SAL.

This sequence belongs to the TRAFAC class translation factor GTPase superfamily. Classic translation factor GTPase family. EF-Tu/EF-1A subfamily. In terms of assembly, monomer.

The protein resides in the cytoplasm. The enzyme catalyses GTP + H2O = GDP + phosphate + H(+). Functionally, GTP hydrolase that promotes the GTP-dependent binding of aminoacyl-tRNA to the A-site of ribosomes during protein biosynthesis. The chain is Elongation factor Tu 2 from Syntrophomonas wolfei subsp. wolfei (strain DSM 2245B / Goettingen).